The sequence spans 541 residues: Pseudokinase FAM20A (541 aa).

The first 33 residues, 1-33 (MPGLRRDRLLTLLLLGALLSADLYFHLWPQVQR), serve as a signal peptide directing secretion. The interval 38 to 90 (RERPRGCPCTGRASSLARDSAAAASDPGTIVHNFSRTEPRTEPAGGSHSGSSS) is disordered. Residues 49-63 (RASSLARDSAAAASD) show a composition bias toward low complexity. Residues Asn-70, Asn-145, and Asn-287 are each glycosylated (N-linked (GlcNAc...) asparagine). Cystine bridges form between Cys-314–Cys-330, Cys-319–Cys-323, Cys-378–Cys-452, and Cys-453–Cys-512. The N-linked (GlcNAc...) asparagine glycan is linked to Asn-388. Residue Asn-538 is glycosylated (N-linked (GlcNAc...) asparagine).

The protein belongs to the FAM20 family. Interacts with FAM20C; probably forming a heterotetramer of 2 subunits of FAM20A and 2 subunits of FAM20C. In terms of processing, N-glycosylated. As to expression, highly expressed in lung and liver. Intermediate levels in thymus and ovary.

It localises to the secreted. The protein localises to the golgi apparatus. The protein resides in the endoplasmic reticulum. Pseudokinase that acts as an allosteric activator of the Golgi serine/threonine protein kinase FAM20C and is involved in biomineralization of teeth. Forms a complex with FAM20C and increases the ability of FAM20C to phosphorylate the proteins that form the 'matrix' that guides the deposition of the enamel minerals. The polypeptide is Pseudokinase FAM20A (Homo sapiens (Human)).